The sequence spans 217 residues: MFITFEGIEGTGKTTQIKKLTAFLEESGHNVDVTLEPGGSRIGKELRKILLNMDSTDITGECELFLYLADRAQHVGQVIKPAVEAGKIIISDRFADSTIVYQGYGRGLDPKLLRELNDVAVSGNWPDLTILLDIDPEIGLKRAMTRNLQENKMQEEGRFEAESLEFHNRVREGYLTWAALNNDRIVVVNADQTPDEIFKEIKAKVVERIKGDFVTNG.

7 to 14 is an ATP binding site; it reads GIEGTGKT.

This sequence belongs to the thymidylate kinase family.

The catalysed reaction is dTMP + ATP = dTDP + ADP. Phosphorylation of dTMP to form dTDP in both de novo and salvage pathways of dTTP synthesis. In Maridesulfovibrio salexigens (strain ATCC 14822 / DSM 2638 / NCIMB 8403 / VKM B-1763) (Desulfovibrio salexigens), this protein is Thymidylate kinase.